The primary structure comprises 906 residues: Protein translocase subunit SecA (906 aa).

Residues Q89, 107–111, and D502 each bind ATP; that span reads GEGKT. The Zn(2+) site is built by C890, C892, C901, and H902.

This sequence belongs to the SecA family. Monomer and homodimer. Part of the essential Sec protein translocation apparatus which comprises SecA, SecYEG and auxiliary proteins SecDF-YajC and YidC. The cofactor is Zn(2+).

The protein resides in the cell inner membrane. It localises to the cytoplasm. The enzyme catalyses ATP + H2O + cellular proteinSide 1 = ADP + phosphate + cellular proteinSide 2.. In terms of biological role, part of the Sec protein translocase complex. Interacts with the SecYEG preprotein conducting channel. Has a central role in coupling the hydrolysis of ATP to the transfer of proteins into and across the cell membrane, serving both as a receptor for the preprotein-SecB complex and as an ATP-driven molecular motor driving the stepwise translocation of polypeptide chains across the membrane. In Bartonella quintana (strain Toulouse) (Rochalimaea quintana), this protein is Protein translocase subunit SecA.